We begin with the raw amino-acid sequence, 457 residues long: tRNA-2-methylthio-N(6)-dimethylallyladenosine synthase (457 aa).

The MTTase N-terminal domain maps to 18-133; the sequence is KKLFIETYGC…LPELIASVEA (116 aa). The [4Fe-4S] cluster site is built by Cys27, Cys63, Cys97, Cys171, Cys175, and Cys178. One can recognise a Radical SAM core domain in the interval 157–390; the sequence is CGNHISGFVS…IALQNRLSAE (234 aa). The TRAM domain occupies 393–456; the sequence is NRCIGKTYEV…SATLKGEEVF (64 aa).

This sequence belongs to the methylthiotransferase family. MiaB subfamily. As to quaternary structure, monomer. [4Fe-4S] cluster serves as cofactor.

The protein localises to the cytoplasm. It carries out the reaction N(6)-dimethylallyladenosine(37) in tRNA + (sulfur carrier)-SH + AH2 + 2 S-adenosyl-L-methionine = 2-methylsulfanyl-N(6)-dimethylallyladenosine(37) in tRNA + (sulfur carrier)-H + 5'-deoxyadenosine + L-methionine + A + S-adenosyl-L-homocysteine + 2 H(+). Its function is as follows. Catalyzes the methylthiolation of N6-(dimethylallyl)adenosine (i(6)A), leading to the formation of 2-methylthio-N6-(dimethylallyl)adenosine (ms(2)i(6)A) at position 37 in tRNAs that read codons beginning with uridine. This is tRNA-2-methylthio-N(6)-dimethylallyladenosine synthase from Bacteroides fragilis (strain ATCC 25285 / DSM 2151 / CCUG 4856 / JCM 11019 / LMG 10263 / NCTC 9343 / Onslow / VPI 2553 / EN-2).